The following is a 96-amino-acid chain: Co-chaperonin GroES (96 aa).

It belongs to the GroES chaperonin family. In terms of assembly, heptamer of 7 subunits arranged in a ring. Interacts with the chaperonin GroEL.

It localises to the cytoplasm. Together with the chaperonin GroEL, plays an essential role in assisting protein folding. The GroEL-GroES system forms a nano-cage that allows encapsulation of the non-native substrate proteins and provides a physical environment optimized to promote and accelerate protein folding. GroES binds to the apical surface of the GroEL ring, thereby capping the opening of the GroEL channel. The polypeptide is Co-chaperonin GroES (Actinobacillus pleuropneumoniae serotype 5b (strain L20)).